A 509-amino-acid polypeptide reads, in one-letter code: Maturase K (509 aa).

This sequence belongs to the intron maturase 2 family. MatK subfamily.

The protein resides in the plastid. Its subcellular location is the chloroplast. In terms of biological role, usually encoded in the trnK tRNA gene intron. Probably assists in splicing its own and other chloroplast group II introns. This chain is Maturase K, found in Pereskia aculeata (Barbados gooseberry).